Here is a 365-residue protein sequence, read N- to C-terminus: Nicotinate N-methyltransferase 1 (365 aa).

Asp-232 lines the S-adenosyl-L-methionine pocket.

Belongs to the class I-like SAM-binding methyltransferase superfamily. Cation-independent O-methyltransferase family.

The enzyme catalyses nicotinate + S-adenosyl-L-methionine = N-methylnicotinate + S-adenosyl-L-homocysteine. Involved in nicotinate detoxification in planta. Catalyzes the conversion of nicotinate to N-methylnicotinate, which is a detoxified form of endogenous nicotinate in planta. The polypeptide is Nicotinate N-methyltransferase 1 (Oryza sativa subsp. japonica (Rice)).